A 335-amino-acid chain; its full sequence is Luciferase-like monooxygenase (335 aa).

This sequence to bacterial alkanal monooxygenase alpha and beta chains.

This chain is Luciferase-like monooxygenase (yhbW), found in Escherichia coli O6:H1 (strain CFT073 / ATCC 700928 / UPEC).